We begin with the raw amino-acid sequence, 488 residues long: GTPase Der (488 aa).

2 consecutive EngA-type G domains span residues Pro-3–Met-166 and Ile-199–Thr-372. GTP is bound by residues Gly-9–Ser-16, Asp-56–Ile-60, Asn-118–Asp-121, Gly-205–Ser-212, Asp-252–Val-256, and Asn-317–Asp-320. Positions Arg-373–Asp-457 constitute a KH-like domain.

The protein belongs to the TRAFAC class TrmE-Era-EngA-EngB-Septin-like GTPase superfamily. EngA (Der) GTPase family. Associates with the 50S ribosomal subunit.

GTPase that plays an essential role in the late steps of ribosome biogenesis. The protein is GTPase Der of Shewanella sp. (strain ANA-3).